The following is a 612-amino-acid chain: Elongation factor 4 (612 aa).

The tr-type G domain occupies 12–194 (SRIRNFSIIA…QIVEKVPAPT (183 aa)). Residues 24–29 (DHGKST) and 141–144 (NKID) each bind GTP.

This sequence belongs to the TRAFAC class translation factor GTPase superfamily. Classic translation factor GTPase family. LepA subfamily.

It is found in the cell membrane. It carries out the reaction GTP + H2O = GDP + phosphate + H(+). Functionally, required for accurate and efficient protein synthesis under certain stress conditions. May act as a fidelity factor of the translation reaction, by catalyzing a one-codon backward translocation of tRNAs on improperly translocated ribosomes. Back-translocation proceeds from a post-translocation (POST) complex to a pre-translocation (PRE) complex, thus giving elongation factor G a second chance to translocate the tRNAs correctly. Binds to ribosomes in a GTP-dependent manner. The chain is Elongation factor 4 from Bacillus subtilis (strain 168).